A 220-amino-acid polypeptide reads, in one-letter code: Ribosomal RNA large subunit methyltransferase E (220 aa).

5 residues coordinate S-adenosyl-L-methionine: glycine 60, tryptophan 62, aspartate 92, aspartate 108, and aspartate 133. Catalysis depends on lysine 173, which acts as the Proton acceptor. Residues 198–220 (KPKASRDKSSETFILGRQLKHPR) form a disordered region.

It belongs to the class I-like SAM-binding methyltransferase superfamily. RNA methyltransferase RlmE family.

It localises to the cytoplasm. It carries out the reaction uridine(2552) in 23S rRNA + S-adenosyl-L-methionine = 2'-O-methyluridine(2552) in 23S rRNA + S-adenosyl-L-homocysteine + H(+). Functionally, specifically methylates the uridine in position 2552 of 23S rRNA at the 2'-O position of the ribose in the fully assembled 50S ribosomal subunit. This chain is Ribosomal RNA large subunit methyltransferase E, found in Burkholderia cenocepacia (strain HI2424).